A 1246-amino-acid polypeptide reads, in one-letter code: DNA-directed RNA polymerase subunit beta (1246 aa).

The interval 1171–1246 (IDDDAGEMSL…EFDGYNDFKA (76 aa)) is disordered. Composition is skewed to acidic residues over residues 1202–1223 (DEEEKDEDNDSEEALITEEDFE) and 1230–1240 (EYAEDDDEFDG).

The protein belongs to the RNA polymerase beta chain family. As to quaternary structure, the RNAP catalytic core consists of 2 alpha, 1 beta, 1 beta' and 1 omega subunit. When a sigma factor is associated with the core the holoenzyme is formed, which can initiate transcription.

It carries out the reaction RNA(n) + a ribonucleoside 5'-triphosphate = RNA(n+1) + diphosphate. Its function is as follows. DNA-dependent RNA polymerase catalyzes the transcription of DNA into RNA using the four ribonucleoside triphosphates as substrates. This chain is DNA-directed RNA polymerase subunit beta, found in Alkaliphilus metalliredigens (strain QYMF).